The chain runs to 417 residues: Queuine tRNA-ribosyltransferase accessory subunit 2 (417 aa).

Residues C324, C326, C329, and H355 each coordinate Zn(2+).

This sequence belongs to the queuine tRNA-ribosyltransferase family. QTRT2 subfamily. In terms of assembly, heterodimer of a catalytic subunit and an accessory subunit. Zn(2+) is required as a cofactor.

It is found in the cytoplasm. In terms of biological role, non-catalytic subunit of the queuine tRNA-ribosyltransferase (TGT) that catalyzes the base-exchange of a guanine (G) residue with queuine (Q) at position 34 (anticodon wobble position) in tRNAs with GU(N) anticodons (tRNA-Asp, -Asn, -His and -Tyr), resulting in the hypermodified nucleoside queuosine (7-(((4,5-cis-dihydroxy-2-cyclopenten-1-yl)amino)methyl)-7-deazaguanosine). The protein is Queuine tRNA-ribosyltransferase accessory subunit 2 of Drosophila virilis (Fruit fly).